A 354-amino-acid chain; its full sequence is Tribbles homolog 3 (354 aa).

Positions 1 to 127 are interaction with DDIT3/CHOP; that stretch reads MRATPLAASA…QHVARPTEVL (127 aa). Residues 36–61 form a disordered region; the sequence is RDEPEPGPLPSLLPPSPPPASDLSPA. Pro residues predominate over residues 41-55; the sequence is PGPLPSLLPPSPPPA. The 248-residue stretch at 68 to 315 folds into the Protein kinase domain; it reads LGPYILLERE…ALGILLHPWL (248 aa). A compositionally biased stretch (basic and acidic residues) spans 320 to 333; the sequence is GRVSPPQSDRREMD. The disordered stretch occupies residues 320–354; sequence GRVSPPQSDRREMDQVVPDGPQLEEAEEGEVGLYG. Residues 341-354 show a composition bias toward acidic residues; sequence QLEEAEEGEVGLYG.

Belongs to the protein kinase superfamily. CAMK Ser/Thr protein kinase family. Tribbles subfamily. In terms of assembly, interacts with AKT1, AKT2, MAP2K1 and MAP2K7. Interacts with ATF4. Interacts with DDIT3/CHOP and inhibits its interaction with EP300/P300. Interacts with APOBEC3C. Interacts (via N-terminus) with APOBEC3A. Interacts with RELA. In terms of tissue distribution, highly expressed in liver. Not detected in heart, brain, spleen, lung, skeletal muscle, kidney or testis.

The protein resides in the nucleus. In terms of biological role, inactive protein kinase which acts as a regulator of the integrated stress response (ISR), a process for adaptation to various stress. Inhibits the transcriptional activity of DDIT3/CHOP and is involved in DDIT3/CHOP-dependent cell death during ER stress. May play a role in programmed neuronal cell death but does not appear to affect non-neuronal cells. Acts as a negative feedback regulator of the ATF4-dependent transcription during the ISR: while TRIB3 expression is promoted by ATF4, TRIB3 protein interacts with ATF4 and inhibits ATF4 transcription activity. Disrupts insulin signaling by binding directly to Akt kinases and blocking their activation. May bind directly to and mask the 'Thr-308' phosphorylation site in AKT1. Interacts with the NF-kappa-B transactivator p65 RELA and inhibits its phosphorylation and thus its transcriptional activation activity. Interacts with MAPK kinases and regulates activation of MAP kinases. Can inhibit APOBEC3A editing of nuclear DNA. This is Tribbles homolog 3 (Trib3) from Mus musculus (Mouse).